The chain runs to 343 residues: UDP-3-O-acylglucosamine N-acyltransferase (343 aa).

His245 (proton acceptor) is an active-site residue.

This sequence belongs to the transferase hexapeptide repeat family. LpxD subfamily. As to quaternary structure, homotrimer.

It catalyses the reaction a UDP-3-O-[(3R)-3-hydroxyacyl]-alpha-D-glucosamine + a (3R)-hydroxyacyl-[ACP] = a UDP-2-N,3-O-bis[(3R)-3-hydroxyacyl]-alpha-D-glucosamine + holo-[ACP] + H(+). It participates in bacterial outer membrane biogenesis; LPS lipid A biosynthesis. Its function is as follows. Catalyzes the N-acylation of UDP-3-O-acylglucosamine using 3-hydroxyacyl-ACP as the acyl donor. Is involved in the biosynthesis of lipid A, a phosphorylated glycolipid that anchors the lipopolysaccharide to the outer membrane of the cell. The sequence is that of UDP-3-O-acylglucosamine N-acyltransferase from Phenylobacterium zucineum (strain HLK1).